Consider the following 326-residue polypeptide: G-protein coupled receptor 171 (326 aa).

Residues 1–19 (MTNSSMFCPIYRDLEPFTY) lie on the Extracellular side of the membrane. Residues 20 to 40 (FFYLVYLIGIIGSCFATWAFI) form a helical membrane-spanning segment. Residues 41–48 (QKSTNHRC) lie on the Cytoplasmic side of the membrane. A helical transmembrane segment spans residues 49–69 (VSIYLINLLTADFLLTLALPV). Topologically, residues 70-89 (KIVVDLGVAPWKLRIFHCQV) are extracellular. Cysteine 87 and cysteine 165 are disulfide-bonded. A helical transmembrane segment spans residues 90–110 (TACLIYINMYLSIIFLAFVSI). Residues 111 to 133 (DRCLQLVHSCKIYRIQEPGFAKM) lie on the Cytoplasmic side of the membrane. The helical transmembrane segment at 134–154 (ISAVVWLMVLLIMVPNMVIPI) threads the bilayer. The Extracellular portion of the chain corresponds to 155 to 182 (KNIKEKSNVGCMEFKREFGKNWHLLTNF). Residues 183–203 (ICVAIFLNFSAIILISNFLVI) form a helical membrane-spanning segment. Topologically, residues 204–221 (RQLYRNRDNANYPSVKSA) are cytoplasmic. A helical membrane pass occupies residues 222–242 (LLNILLVTASYIICFVPYHAV). Over 243–268 (RIPYTLSQTEVISDCSTRIALFKAKE) the chain is Extracellular. The chain crosses the membrane as a helical span at residues 269 to 289 (ATLLLAVSNLCFDPILYYHLS). At 290–326 (KAFRLKVTETFASPQKMKAREEKPRRENDVQSTGSAC) the chain is on the cytoplasmic side. The disordered stretch occupies residues 305–326 (KMKAREEKPRRENDVQSTGSAC). Residues 307 to 318 (KAREEKPRREND) are compositionally biased toward basic and acidic residues.

Belongs to the G-protein coupled receptor 1 family.

Its subcellular location is the cell membrane. Functionally, G-protein coupled receptor for Big LEN, a 16-amino acid neuropeptide produced from the precursor protein, proSAAS (encoded by PCSK1N). Acts through a G(i)-alpha-mediated pathway in response to Big LEN. Big LEN-GPR171 system plays an important role in regulating feeding and metabolism. Also plays a role in modulating fear and anxiety-like behaviors in the basolateral amygdala. Big LEN-GPR171 modulates the mu-type opioid receptor signaling and antinociception. Acts as a negative regulator T cell function. The protein is G-protein coupled receptor 171 of Rattus norvegicus (Rat).